Reading from the N-terminus, the 271-residue chain is 3-methyl-2-oxobutanoate hydroxymethyltransferase 1 (271 aa).

Asp53 and Asp92 together coordinate Mg(2+). 3-methyl-2-oxobutanoate contacts are provided by residues 53–54, Asp92, and Lys120; that span reads DS. Residue Glu122 participates in Mg(2+) binding. The active-site Proton acceptor is the Glu189.

Belongs to the PanB family. In terms of assembly, homodecamer; pentamer of dimers. Mg(2+) serves as cofactor.

The protein localises to the cytoplasm. The enzyme catalyses 3-methyl-2-oxobutanoate + (6R)-5,10-methylene-5,6,7,8-tetrahydrofolate + H2O = 2-dehydropantoate + (6S)-5,6,7,8-tetrahydrofolate. It participates in cofactor biosynthesis; (R)-pantothenate biosynthesis; (R)-pantoate from 3-methyl-2-oxobutanoate: step 1/2. Functionally, catalyzes the reversible reaction in which hydroxymethyl group from 5,10-methylenetetrahydrofolate is transferred onto alpha-ketoisovalerate to form ketopantoate. The sequence is that of 3-methyl-2-oxobutanoate hydroxymethyltransferase 1 from Burkholderia ambifaria (strain ATCC BAA-244 / DSM 16087 / CCUG 44356 / LMG 19182 / AMMD) (Burkholderia cepacia (strain AMMD)).